Consider the following 411-residue polypeptide: MELISKALEAVRRYPLCDSCLGRLFALMGYGIENRERGQAIKTILHMAAVSDYRKGKDVTADLIALAKCHLPTRRFLAGVGIRVDEERCYICGDLMEGVEKYAEMAVEQLRGLDFVSFAVGSTLPEELLEKEAEVVKSLLVTTGESVKHEVNRRIGKELLRRLSDKRVDKLRPNVVVNVDLVSGQVKVVRNPILIGGRYLKLGRKIAQAKRFGNVRTTLLEKLAYLRDTFGGEDHVIHVSGREDSDARMLGSGRPLVVEVKQPLRYTAQVAPFRDKDVIFLPVGFTDRNEVRRLKEKAKTDIKLYRVLVLSESPLKQDDLSKLSALSGATVTQYTPRRIKRLHPRKKRVRMVYDVAWRLVSPHVFELYIRCQGGLYVKEFVHGDGGRTAPNVAELLNTRLEVLELDVLYIE.

The THUMP domain maps to 65–192 (ALAKCHLPTR…SGQVKVVRNP (128 aa)). D244 (nucleophile) is an active-site residue. Substrate contacts are provided by Y305 and Y376.

It belongs to the pseudouridine synthase Pus10 family.

The catalysed reaction is uridine(54) in tRNA = pseudouridine(54) in tRNA. It catalyses the reaction uridine(55) in tRNA = pseudouridine(55) in tRNA. In terms of biological role, responsible for synthesis of pseudouridine from uracil-54 and uracil-55 in the psi GC loop of transfer RNAs. This chain is tRNA pseudouridine synthase Pus10, found in Pyrobaculum arsenaticum (strain DSM 13514 / JCM 11321 / PZ6).